Here is a 308-residue protein sequence, read N- to C-terminus: Ribosomal RNA small subunit methyltransferase H (308 aa).

S-adenosyl-L-methionine-binding positions include 36–38 (GGH), aspartate 55, phenylalanine 86, aspartate 103, and glutamine 110.

Belongs to the methyltransferase superfamily. RsmH family.

It is found in the cytoplasm. The catalysed reaction is cytidine(1402) in 16S rRNA + S-adenosyl-L-methionine = N(4)-methylcytidine(1402) in 16S rRNA + S-adenosyl-L-homocysteine + H(+). Specifically methylates the N4 position of cytidine in position 1402 (C1402) of 16S rRNA. This chain is Ribosomal RNA small subunit methyltransferase H, found in Helicobacter pylori (strain Shi470).